The chain runs to 467 residues: Gustatory and odorant receptor 22 (467 aa).

The Cytoplasmic segment spans residues 1 to 106 (MIHTQMEDAQ…MPRTTFTWCS (106 aa)). A helical transmembrane segment spans residues 107 to 127 (KAFLWAYFIYACETVIVLVVA). The Extracellular segment spans residues 128–144 (RERINKFISTSDKRFDE). The chain crosses the membrane as a helical span at residues 145–165 (VIYNIIFMSIMVPHFLLPVAS). At 166–198 (WRNGSEVAKFKNMWTDFQYKYLIVTGKPIVFPK) the chain is on the cytoplasmic side. Residues 199–219 (LYPITWTLCIVSWSLSLVIIL) form a helical membrane-spanning segment. Residues 220-238 (SQYYLQPDFQFCHTFAYYH) lie on the Extracellular side of the membrane. The chain crosses the membrane as a helical span at residues 239–259 (IIAMLNGFCSLWFVNCTAFGT). Residues 260–304 (ASKAFAKELTDVLATERPAAKLTEYRHLWVDLSHMMQQLGKAYSN) lie on the Cytoplasmic side of the membrane. A helical membrane pass occupies residues 305-325 (MYGIYCLVIFFTTIIATYGSL). At 326 to 337 (SEIIEHGATYKE) the chain is on the extracellular side. A helical transmembrane segment spans residues 338 to 358 (VGLFVIVFYCMSLLFIICNEA). The Cytoplasmic segment spans residues 359-414 (HHASKRVGLNFQERLLNVNLTAVDKATQKEVEMFLVAIDKNPPTMNLDGYANINRG). A helical membrane pass occupies residues 415-435 (LITSNISFMATYLVVLMQFKL). At 436–467 (TLLRQSAKNAFISALKANLSRIRSLDADKVNT) the chain is on the extracellular side. Asparagine 453 is a glycosylation site (N-linked (GlcNAc...) asparagine).

It belongs to the insect chemoreceptor superfamily. Gustatory receptor (GR) family. Gr21a subfamily. In terms of tissue distribution, carbon dioxide-responsive neurons coexpress GPRgr22 and GPRgr24 in the maxillary palp at both larval and adult life stages.

It is found in the cell membrane. Its function is as follows. Gustatory receptor which mediates acceptance or avoidance behavior, depending on its substrates. GPRgr22 and GPRgr24 together are sufficient for olfactory carbon dioxide-chemosensation. In Anopheles gambiae (African malaria mosquito), this protein is Gustatory and odorant receptor 22.